Consider the following 109-residue polypeptide: Aquaporin-2 (109 aa).

Topologically, residues 1–6 (SIAFSR) are cytoplasmic. Residues 7–27 (AVFSEFLATLLFVFFGLGSAL) traverse the membrane as a helical segment. Residues 28 to 35 (NWPQALPS) lie on the Extracellular side of the membrane. A helical transmembrane segment spans residues 36–54 (VLQIAMAFGLAIGTLVQTL). Topologically, residues 55 to 59 (GHISG) are cytoplasmic. Positions 60-69 (AHINPAVTVA) form an intramembrane region, discontinuously helical. The NPA 1 signature appears at 63–65 (NPA). Residues 70–80 (CLVGCHVSFLR) are Cytoplasmic-facing. A helical membrane pass occupies residues 81-102 (ATFYVAAQLLGAVAGAALLHEL). The Extracellular portion of the chain corresponds to 103–109 (TPPDIRG).

This sequence belongs to the MIP/aquaporin (TC 1.A.8) family. Homotetramer. Serine phosphorylation is necessary and sufficient for expression at the apical membrane. Endocytosis is not phosphorylation-dependent. In terms of processing, N-glycosylated.

It is found in the apical cell membrane. It localises to the basolateral cell membrane. The protein resides in the cell membrane. The protein localises to the cytoplasmic vesicle membrane. Its subcellular location is the golgi apparatus. It is found in the trans-Golgi network membrane. The enzyme catalyses H2O(in) = H2O(out). The catalysed reaction is glycerol(in) = glycerol(out). Forms a water-specific channel that provides the plasma membranes of renal collecting duct with high permeability to water, thereby permitting water to move in the direction of an osmotic gradient. Plays an essential role in renal water homeostasis. Could also be permeable to glycerol. The sequence is that of Aquaporin-2 from Amblysomus hottentotus (Hottentot golden mole).